Here is a 1297-residue protein sequence, read N- to C-terminus: Phosphoribosylformylglycinamidine synthase (1297 aa).

Residues 305-324 form a disordered region; it reads FPGAATGSGGEIRDEGATGR. 307-318 is an ATP binding site; the sequence is GAATGSGGEIRD. Positions 679, 718, 722, and 886 each coordinate Mg(2+). ATP is bound at residue S888. The 254-residue stretch at 1044–1297 folds into the Glutamine amidotransferase type-1 domain; sequence IAVLREQGVN…LFRNARVFFK (254 aa). C1137 acts as the Nucleophile in catalysis. Active-site residues include H1262 and E1264.

In the N-terminal section; belongs to the FGAMS family. In terms of assembly, monomer.

Its subcellular location is the cytoplasm. The catalysed reaction is N(2)-formyl-N(1)-(5-phospho-beta-D-ribosyl)glycinamide + L-glutamine + ATP + H2O = 2-formamido-N(1)-(5-O-phospho-beta-D-ribosyl)acetamidine + L-glutamate + ADP + phosphate + H(+). The protein operates within purine metabolism; IMP biosynthesis via de novo pathway; 5-amino-1-(5-phospho-D-ribosyl)imidazole from N(2)-formyl-N(1)-(5-phospho-D-ribosyl)glycinamide: step 1/2. Functionally, phosphoribosylformylglycinamidine synthase involved in the purines biosynthetic pathway. Catalyzes the ATP-dependent conversion of formylglycinamide ribonucleotide (FGAR) and glutamine to yield formylglycinamidine ribonucleotide (FGAM) and glutamate. The protein is Phosphoribosylformylglycinamidine synthase of Mannheimia succiniciproducens (strain KCTC 0769BP / MBEL55E).